Reading from the N-terminus, the 349-residue chain is Phosphoribosylformylglycinamidine cyclo-ligase (349 aa).

This sequence belongs to the AIR synthase family.

It localises to the cytoplasm. The enzyme catalyses 2-formamido-N(1)-(5-O-phospho-beta-D-ribosyl)acetamidine + ATP = 5-amino-1-(5-phospho-beta-D-ribosyl)imidazole + ADP + phosphate + H(+). It functions in the pathway purine metabolism; IMP biosynthesis via de novo pathway; 5-amino-1-(5-phospho-D-ribosyl)imidazole from N(2)-formyl-N(1)-(5-phospho-D-ribosyl)glycinamide: step 2/2. The sequence is that of Phosphoribosylformylglycinamidine cyclo-ligase from Listeria monocytogenes serovar 1/2a (strain ATCC BAA-679 / EGD-e).